Here is a 159-residue protein sequence, read N- to C-terminus: Crossover junction endodeoxyribonuclease RuvC (159 aa).

Residues Asp7, Glu67, and Asp139 contribute to the active site. Positions 7, 67, and 139 each coordinate Mg(2+).

Belongs to the RuvC family. In terms of assembly, homodimer which binds Holliday junction (HJ) DNA. The HJ becomes 2-fold symmetrical on binding to RuvC with unstacked arms; it has a different conformation from HJ DNA in complex with RuvA. In the full resolvosome a probable DNA-RuvA(4)-RuvB(12)-RuvC(2) complex forms which resolves the HJ. Requires Mg(2+) as cofactor.

The protein localises to the cytoplasm. It carries out the reaction Endonucleolytic cleavage at a junction such as a reciprocal single-stranded crossover between two homologous DNA duplexes (Holliday junction).. Its function is as follows. The RuvA-RuvB-RuvC complex processes Holliday junction (HJ) DNA during genetic recombination and DNA repair. Endonuclease that resolves HJ intermediates. Cleaves cruciform DNA by making single-stranded nicks across the HJ at symmetrical positions within the homologous arms, yielding a 5'-phosphate and a 3'-hydroxyl group; requires a central core of homology in the junction. The consensus cleavage sequence is 5'-(A/T)TT(C/G)-3'. Cleavage occurs on the 3'-side of the TT dinucleotide at the point of strand exchange. HJ branch migration catalyzed by RuvA-RuvB allows RuvC to scan DNA until it finds its consensus sequence, where it cleaves and resolves the cruciform DNA. The polypeptide is Crossover junction endodeoxyribonuclease RuvC (Orientia tsutsugamushi (strain Boryong) (Rickettsia tsutsugamushi)).